The sequence spans 158 residues: Small ribosomal subunit protein uS15 (158 aa).

Over residues 1–18 (MARMHARKRGKSGSKRPP) the composition is skewed to basic residues. A disordered region spans residues 1–21 (MARMHARKRGKSGSKRPPRTA).

Belongs to the universal ribosomal protein uS15 family. In terms of assembly, part of the 30S ribosomal subunit.

The polypeptide is Small ribosomal subunit protein uS15 (Pyrococcus furiosus (strain ATCC 43587 / DSM 3638 / JCM 8422 / Vc1)).